A 121-amino-acid polypeptide reads, in one-letter code: Small ribosomal subunit protein uS13 (121 aa).

A disordered region spans residues Arg-92–Lys-121. Positions Lys-110–Lys-121 are enriched in basic residues.

It belongs to the universal ribosomal protein uS13 family. Part of the 30S ribosomal subunit. Forms a loose heterodimer with protein S19. Forms two bridges to the 50S subunit in the 70S ribosome.

In terms of biological role, located at the top of the head of the 30S subunit, it contacts several helices of the 16S rRNA. In the 70S ribosome it contacts the 23S rRNA (bridge B1a) and protein L5 of the 50S subunit (bridge B1b), connecting the 2 subunits; these bridges are implicated in subunit movement. Contacts the tRNAs in the A and P-sites. This Mycoplasma capricolum subsp. capricolum (strain California kid / ATCC 27343 / NCTC 10154) protein is Small ribosomal subunit protein uS13.